The chain runs to 253 residues: 5-oxoprolinase subunit A (253 aa).

It belongs to the LamB/PxpA family. In terms of assembly, forms a complex composed of PxpA, PxpB and PxpC.

It carries out the reaction 5-oxo-L-proline + ATP + 2 H2O = L-glutamate + ADP + phosphate + H(+). In terms of biological role, catalyzes the cleavage of 5-oxoproline to form L-glutamate coupled to the hydrolysis of ATP to ADP and inorganic phosphate. This is 5-oxoprolinase subunit A from Bacillus anthracis (strain A0248).